A 190-amino-acid chain; its full sequence is MAVEPSGKLIVFSAPSGAGKTTIATMVLQRIANLSFSVSATTRKQREGEQDGVNYYFLDKATFEKKIEQGGFIEHEFFFGNYYGTLLDATESVLASGKNLLLDVDVKGALNVRKLFGERSLLIFIQPPSMEVLIERLQGRGSEDDAALQERLERARFEMSFADQFDTIIVNNNLTAAVDDVEAAIVNFIG.

One can recognise a Guanylate kinase-like domain in the interval 7–186 (GKLIVFSAPS…AVDDVEAAIV (180 aa)). Residue 14-21 (APSGAGKT) participates in ATP binding.

This sequence belongs to the guanylate kinase family.

It is found in the cytoplasm. The catalysed reaction is GMP + ATP = GDP + ADP. Its function is as follows. Essential for recycling GMP and indirectly, cGMP. In Chlorobium chlorochromatii (strain CaD3), this protein is Guanylate kinase.